A 62-amino-acid chain; its full sequence is Toxin Tst2 (62 aa).

The LCN-type CS-alpha/beta domain maps to 1-62 (KEGYAMDHEG…KVWDYATNKC (62 aa)). 4 cysteine pairs are disulfide-bonded: Cys11-Cys62, Cys15-Cys38, Cys23-Cys43, and Cys27-Cys45. Cys62 is modified (cysteine amide).

Expressed by the venom gland.

It is found in the secreted. In terms of biological role, alpha toxins bind voltage-independently at site-3 of sodium channels (Nav) and inhibit the inactivation of the activated channels, thereby blocking neuronal transmission. Is toxic to mice. The polypeptide is Toxin Tst2 (Tityus stigmurus (Brazilian scorpion)).